Here is a 222-residue protein sequence, read N- to C-terminus: Myosin regulatory light chain 2 (222 aa).

A disordered region spans residues 1–65; sequence MADEKKKVKK…RGSRKSKRAG (65 aa). Ala-2 carries the N-acetylalanine modification. The span at 19–53 shows a compositional bias: low complexity; it reads TSETASEAASEAATPAPAATPAPAASATGSKRASG. Phosphoserine occurs at positions 66 and 67. 3 EF-hand domains span residues 75-110, 147-180, and 181-216; these read KQIA…VGKI, DEDE…FGDK, and FTMK…KGEE. Residues Asp-88, Asp-90, Asp-92, and Asp-99 each coordinate Ca(2+).

In terms of assembly, myosin is a hexamer of 2 heavy chains and 4 light chains.

The chain is Myosin regulatory light chain 2 (Mlc2) from Drosophila melanogaster (Fruit fly).